Consider the following 87-residue polypeptide: U15-lycotoxin-Ls1f (87 aa).

The N-terminal stretch at 1 to 20 (MNSKIFAVLLLLAFLSCVLS) is a signal peptide. The region spanning 21–66 (DQYCPKSSITACKKMNIRNDCCKDDDCTGGSWCCATPCGNFCKYPT) is the WAP domain. 5 disulfide bridges follow: Cys24–Cys54, Cys32–Cys58, Cys41–Cys53, Cys42–Cys80, and Cys47–Cys62.

It belongs to the venom protein 11 family. 01 (wap-1) subfamily. In terms of processing, contains 5 disulfide bonds. In terms of tissue distribution, expressed by the venom gland.

It localises to the secreted. Functionally, has antibacterial activity. The chain is U15-lycotoxin-Ls1f from Lycosa singoriensis (Wolf spider).